Reading from the N-terminus, the 435-residue chain is Cytochrome c biogenesis protein Ccs1 (435 aa).

The next 3 helical transmembrane spans lie at 17–37, 77–97, and 163–183; these read LSLSISLLLLIASISIIGTII, NPCFVLVLVLFFCSLLACTFS, and IAPIVVHFSIILTFIGSLISL.

Belongs to the Ccs1/CcsB family. May interact with CcsA.

It localises to the plastid. The protein resides in the chloroplast thylakoid membrane. Required during biogenesis of c-type cytochromes (cytochrome c6 and cytochrome f) at the step of heme attachment. The polypeptide is Cytochrome c biogenesis protein Ccs1 (Gracilaria tenuistipitata var. liui (Red alga)).